Consider the following 188-residue polypeptide: MASYTTTDFKPGLKFMQDGEPCVIIENEFVKPGKGQAFTRTRIRKLISGKVLDVNFKSGTSVEAADVMDLNLNYSYKDEAFWYFMHPETFEQYSADAKAVGEAEKWLLDQAECIVTLWNGSPISVTPPNFVELEVVDTDPGLKGDTAGTGGKPATLSTGAVVRVPLFIQIGEVIKVDTRSGEYVSRVK.

Lys34 carries the post-translational modification N6-(3,6-diaminohexanoyl)-5-hydroxylysine.

The protein belongs to the elongation factor P family. Post-translationally, may be beta-lysylated on the epsilon-amino group of Lys-34 by the combined action of EpmA and EpmB, and then hydroxylated on the C5 position of the same residue by EpmC (if this protein is present). Lysylation is critical for the stimulatory effect of EF-P on peptide-bond formation. The lysylation moiety may extend toward the peptidyltransferase center and stabilize the terminal 3-CCA end of the tRNA. Hydroxylation of the C5 position on Lys-34 may allow additional potential stabilizing hydrogen-bond interactions with the P-tRNA.

It localises to the cytoplasm. The protein operates within protein biosynthesis; polypeptide chain elongation. Functionally, involved in peptide bond synthesis. Alleviates ribosome stalling that occurs when 3 or more consecutive Pro residues or the sequence PPG is present in a protein, possibly by augmenting the peptidyl transferase activity of the ribosome. Modification of Lys-34 is required for alleviation. This is Elongation factor P from Actinobacillus succinogenes (strain ATCC 55618 / DSM 22257 / CCUG 43843 / 130Z).